The chain runs to 626 residues: Glutamine--fructose-6-phosphate aminotransferase [isomerizing] (626 aa).

Residue Cys2 is the Nucleophile; for GATase activity of the active site. The 221-residue stretch at 2 to 222 (CGIVGYIGPQ…NGELARLTPT (221 aa)) folds into the Glutamine amidotransferase type-2 domain. SIS domains follow at residues 293–441 (LPPS…QRQS) and 471–616 (YIEA…VDQP). The active-site For Fru-6P isomerization activity is the Lys621.

In terms of assembly, homodimer.

It localises to the cytoplasm. The enzyme catalyses D-fructose 6-phosphate + L-glutamine = D-glucosamine 6-phosphate + L-glutamate. In terms of biological role, catalyzes the first step in hexosamine metabolism, converting fructose-6P into glucosamine-6P using glutamine as a nitrogen source. This chain is Glutamine--fructose-6-phosphate aminotransferase [isomerizing], found in Thermosynechococcus vestitus (strain NIES-2133 / IAM M-273 / BP-1).